A 274-amino-acid polypeptide reads, in one-letter code: Rhamnulose-1-phosphate aldolase (274 aa).

Glu-117 is a catalytic residue. Residues His-141, His-143, and His-212 each contribute to the Zn(2+) site.

Belongs to the aldolase class II family. RhaD subfamily. As to quaternary structure, homotetramer. The cofactor is Zn(2+).

Its subcellular location is the cytoplasm. The enzyme catalyses L-rhamnulose 1-phosphate = (S)-lactaldehyde + dihydroxyacetone phosphate. It functions in the pathway carbohydrate degradation; L-rhamnose degradation; glycerone phosphate from L-rhamnose: step 3/3. Catalyzes the reversible cleavage of L-rhamnulose-1-phosphate to dihydroxyacetone phosphate (DHAP) and L-lactaldehyde. This Escherichia coli O81 (strain ED1a) protein is Rhamnulose-1-phosphate aldolase.